A 447-amino-acid chain; its full sequence is Putative bacteriocin-SkfA transport system permease protein SkfF (447 aa).

Topologically, residues 1–3 are cytoplasmic; sequence MPF. The chain crosses the membrane as a helical span at residues 4–22; it reads LIMLLFVGAIGFQVSFVSR. The Extracellular portion of the chain corresponds to 23–29; the sequence is STTWDMS. A helical membrane pass occupies residues 30 to 50; that stretch reads IAGWVLTGVFILYTAFGLFSN. At 51 to 59 the chain is on the cytoplasmic side; the sequence is RLPSQMADI. A helical membrane pass occupies residues 60 to 80; the sequence is IWLYGTATSFSKVVYSVLFFS. At 81-85 the chain is on the extracellular side; that stretch reads VTWKA. The helical transmembrane segment at 86–104 threads the bilayer; that stretch reads LLWIISAIFGDVLIVLLSG. The Cytoplasmic segment spans residues 105-113; sequence DHINLLGRS. The helical transmembrane segment at 114 to 134 threads the bilayer; the sequence is IIFVGLFFIAEVWLMSVSCAR. The Extracellular portion of the chain corresponds to 135–141; it reads TVKKMKR. A helical transmembrane segment spans residues 142-160; sequence VYVLVFLLMLGIYSICLYR. The Cytoplasmic segment spans residues 161-189; sequence FFFLQHSSGIWESIARFISGVGLVFDTLS. A helical transmembrane segment spans residues 190 to 208; it reads PLYVVVFIGIITVSFMTIA. Topologically, residues 209–247 are extracellular; it reads FTSRQVEMKESLVKEAEFWEEFQERQFGSGQIIQKPKTT. A helical membrane pass occupies residues 248–268; the sequence is WWGLQGLNGIWSFLWLELLLF. Residues 269 to 297 lie on the Cytoplasmic side of the membrane; sequence KKYLFFHSIHTVMLSGVFYVVIFMYPEWF. A helical transmembrane segment spans residues 298–318; sequence YLLFFLIVSAVMLSSYYSGIV. Over 319–341 the chain is Extracellular; it reads RHSQSGTLHLFPGALWKKIIILE. The chain crosses the membrane as a helical span at residues 342–360; the sequence is LTNTVWLYILYCVSITFMA. Residues 361-363 are Cytoplasmic-facing; the sequence is VGN. A helical transmembrane segment spans residues 364-382; sequence LVYWYIYGLGIYIWFMTIR. Residues 383–404 are Extracellular-facing; the sequence is LFAFTHTNRNDIKLSLPQYYKS. The chain crosses the membrane as a helical span at residues 405 to 423; that stretch reads FFMALGLSGICLYVIHLLT. The Cytoplasmic portion of the chain corresponds to 424-426; it reads ADW. The chain crosses the membrane as a helical span at residues 427–447; the sequence is YTLVVVVCIGSLSWCLFYRFR.

The protein resides in the cell membrane. In terms of biological role, probably part of the ABC transporter SkfEF involved in the export of the bacteriocin SKF. Probably responsible for the translocation of bacteriocin SkfA across the membrane. This Bacillus subtilis (strain 168) protein is Putative bacteriocin-SkfA transport system permease protein SkfF.